Consider the following 474-residue polypeptide: Nitrogenase vanadium-iron protein alpha chain (474 aa).

Positions 49, 75, and 138 each coordinate [8Fe-7S] cluster. Residues Cys-257 and His-423 each contribute to the [7Fe-V-9S-C-homocitryl] cluster site.

Belongs to the NifD/NifK/NifE/NifN family. Hexamer of two alpha, two beta, and two delta chains. Requires [8Fe-7S] cluster as cofactor. The cofactor is [7Fe-V-9S-C-homocitryl] cluster.

It catalyses the reaction N2 + 8 reduced [2Fe-2S]-[ferredoxin] + 16 ATP + 16 H2O = H2 + 8 oxidized [2Fe-2S]-[ferredoxin] + 2 NH4(+) + 16 ADP + 16 phosphate + 6 H(+). Its function is as follows. This vanadium-iron protein is part of the nitrogenase complex that catalyzes the key enzymatic reactions in nitrogen fixation. In Azotobacter vinelandii, this protein is Nitrogenase vanadium-iron protein alpha chain (vnfD).